Consider the following 544-residue polypeptide: Secreted aspartic protease 9 (544 aa).

A signal peptide spans 1-17 (MRLNSVALLSLVATALA). The tract at residues 31–50 (GESKDDLSPEDDSNPRFVKR) is disordered. The region spanning 65 to 479 (YMATLKIGSN…DLDDYEVSLA (415 aa)) is the Peptidase A1 domain. 83–85 (DTG) serves as a coordination point for pepstatin A. A disulfide bridge links C98 with C195. Residue T167 is part of the active site. N-linked (GlcNAc...) asparagine glycans are attached at residues N212, N240, and N252. The active site involves D371. Pepstatin A is bound at residue 371–375 (DTGST). An intrachain disulfide couples C406 to C441. N422 and N499 each carry an N-linked (GlcNAc...) asparagine glycan. The disordered stretch occupies residues 500–520 (SSGSGTTSSSGTSTSTSTRHS).

This sequence belongs to the peptidase A1 family. As to quaternary structure, monomer. In terms of processing, the GPI-anchor is attached to the protein in the endoplasmic reticulum and serves to target the protein to the cell surface. There, the glucosamine-inositol phospholipid moiety is cleaved off and the GPI-modified mannoprotein is covalently attached via its lipidless GPI glycan remnant to the 1,6-beta-glucan of the outer cell wall layer.

The protein resides in the cell membrane. It localises to the secreted. Its subcellular location is the cell wall. It carries out the reaction Preferential cleavage at the carboxyl of hydrophobic amino acids, but fails to cleave 15-Leu-|-Tyr-16, 16-Tyr-|-Leu-17 and 24-Phe-|-Phe-25 of insulin B chain. Activates trypsinogen, and degrades keratin.. In terms of biological role, secreted aspartic peptidases (SAPs) are a group of ten acidic hydrolases considered as key virulence factors. These enzymes supply the fungus with nutrient amino acids as well as are able to degrade the selected host's proteins involved in the immune defense. Moreover, acts toward human hemoglobin though limited proteolysis to generate a variety of antimicrobial hemocidins, enabling to compete with the other microorganisms of the same physiological niche using the microbicidal peptides generated from the host protein. Plays a key role in defense against host by cleaving histatin-5 (Hst 5), a peptide from human saliva that carries out fungicidal activity. The cleavage rate decreases in an order of SAP2 &gt; SAP9 &gt; SAP3 &gt; SAP7 &gt; SAP4 &gt; SAP1 &gt; SAP8. The first cleavage occurs between residues 'Lys-17' and 'His-18' of Hst 5, giving DSHAKRHHGYKRKFHEK and HHSHRGY peptides. Simultaneously, the DSHAKRHHGYKRK peptide is also formed. Further fragmentation by SAP9 results in FHEK product. In Candida albicans (Yeast), this protein is Secreted aspartic protease 9.